Here is a 204-residue protein sequence, read N- to C-terminus: Superoxide dismutase [Mn] (204 aa).

His27 is a Mn(2+) binding site. Residues Thr34 and Thr70 each carry the phosphothreonine modification. 3 residues coordinate Mn(2+): His82, Asp164, and His168.

This sequence belongs to the iron/manganese superoxide dismutase family. As to quaternary structure, homodimer. It depends on Mn(2+) as a cofactor.

The enzyme catalyses 2 superoxide + 2 H(+) = H2O2 + O2. In terms of biological role, destroys superoxide anion radicals which are normally produced within the cells and which are toxic to biological systems. This Bacillus caldotenax protein is Superoxide dismutase [Mn] (sodA).